We begin with the raw amino-acid sequence, 181 residues long: Dehydration-responsive element-binding protein 1E (181 aa).

Positions 14-26 match the Nuclear localization signal motif; that stretch reads KKRAGRRIFKETR. Residues 29–86 constitute a DNA-binding region (AP2/ERF); sequence IYRGVRRRDGDKWVCEVREPIHQRRVWLGTYPTADMAARAHDVAVLALRGRSACLNFS.

Belongs to the AP2/ERF transcription factor family. ERF subfamily.

The protein localises to the nucleus. Transcriptional activator that binds specifically to the DNA sequence 5'-[AG]CCGAC-3'. Binding to the C-repeat/DRE element mediates cold or dehydration-inducible transcription. CBF/DREB1 factors play a key role in freezing tolerance and cold acclimation. The protein is Dehydration-responsive element-binding protein 1E (DREB1E) of Arabidopsis thaliana (Mouse-ear cress).